A 356-amino-acid chain; its full sequence is Phosphate acyltransferase (356 aa).

The protein belongs to the PlsX family. As to quaternary structure, homodimer. Probably interacts with PlsY.

Its subcellular location is the cytoplasm. It catalyses the reaction a fatty acyl-[ACP] + phosphate = an acyl phosphate + holo-[ACP]. Its pathway is lipid metabolism; phospholipid metabolism. Functionally, catalyzes the reversible formation of acyl-phosphate (acyl-PO(4)) from acyl-[acyl-carrier-protein] (acyl-ACP). This enzyme utilizes acyl-ACP as fatty acyl donor, but not acyl-CoA. This chain is Phosphate acyltransferase, found in Stutzerimonas stutzeri (strain A1501) (Pseudomonas stutzeri).